The following is a 360-amino-acid chain: Decorin (360 aa).

A signal peptide spans Met1 to Ala16. Residues Gly17–Glu30 constitute a propeptide that is removed on maturation. O-linked (Xyl...) (glycosaminoglycan) serine glycosylation is present at Ser34. 2 cysteine pairs are disulfide-bonded: Cys55–Cys61 and Cys59–Cys68. LRR repeat units follow at residues Asp74–Ile94, Thr95–Ile118, Ser119–Leu142, Lys143–Ile163, Thr164–Leu187, Lys188–Ile213, Thr214–Ile234, Thr235–Ile258, Ser259–Leu282, Ile283–Ile305, Ser306–Val335, and Gln336–Lys360. N-linked (GlcNAc...) asparagine glycosylation is present at Asn212. N-linked (GlcNAc...) asparagine glycans are attached at residues Asn263 and Asn304. The cysteines at positions 314 and 347 are disulfide-linked.

The protein belongs to the small leucine-rich proteoglycan (SLRP) family. SLRP class I subfamily. In terms of assembly, binds to type I and type II collagen, fibronectin and TGF-beta. Forms a ternary complex with MFAP2 and ELN. Interacts with DPT. Post-translationally, the attached glycosaminoglycan chain can be either chondroitin sulfate or dermatan sulfate depending upon the tissue of origin.

The protein localises to the secreted. The protein resides in the extracellular space. It is found in the extracellular matrix. Functionally, may affect the rate of fibrils formation. This chain is Decorin (DCN), found in Equus caballus (Horse).